The sequence spans 117 residues: Holo-[acyl-carrier-protein] synthase (117 aa).

Mg(2+) contacts are provided by D6 and E55.

This sequence belongs to the P-Pant transferase superfamily. AcpS family. Requires Mg(2+) as cofactor.

It localises to the cytoplasm. It carries out the reaction apo-[ACP] + CoA = holo-[ACP] + adenosine 3',5'-bisphosphate + H(+). In terms of biological role, transfers the 4'-phosphopantetheine moiety from coenzyme A to a Ser of acyl-carrier-protein. The protein is Holo-[acyl-carrier-protein] synthase of Chlorobaculum tepidum (strain ATCC 49652 / DSM 12025 / NBRC 103806 / TLS) (Chlorobium tepidum).